We begin with the raw amino-acid sequence, 1027 residues long: Presequence protease, mitochondrial (1027 aa).

The N-terminal 22 residues, 1-22, are a transit peptide targeting the mitochondrion; sequence MIRQCRAGLRLCRALYQTSYRW. Position 98 (His-98) interacts with Zn(2+). Residue Glu-101 is the Proton acceptor of the active site. Residues His-102 and Glu-199 each contribute to the Zn(2+) site. Residues Cys-113 and Cys-550 are joined by a disulfide bond. The interval 800–829 is disordered; it reads KKERKSIRPHVVEKSSSPSSSGSEISRRAT. Over residues 814–823 the composition is skewed to low complexity; it reads SSSPSSSGSE.

The protein belongs to the peptidase M16 family. PreP subfamily. Monomer and homodimer; homodimerization is induced by binding of the substrate. Zn(2+) is required as a cofactor. A disulfide bond locks the enzyme in the closed conformation preventing substrate entry into the catalytic chamber.

Its subcellular location is the mitochondrion matrix. With respect to regulation, mainly exists in a closed and catalytically competent conformation but a closed-to-open switch allows substrate entry into the catalytic chamber. Substrate binding induces closure and dimerization. A disulfide bond may lock the enzyme in a closed conformation preventing substrate entry into the catalytic chamber, participating in redox regulation of the enzyme. Inhibited by metal-chelating agents. Inhibited by nickel and zinc excess, and slightly activated by manganese. In terms of biological role, metalloendopeptidase of the mitochondrial matrix that functions in peptide cleavage and degradation rather than in protein processing. Has an ATP-independent activity. Specifically cleaves peptides in the range of 5 to 65 residues. Shows a preference for cleavage after small polar residues and before basic residues, but without any positional preference. Degrades the transit peptides of mitochondrial proteins after their cleavage. Also degrades other unstructured peptides. This is Presequence protease, mitochondrial (pitrm1) from Xenopus tropicalis (Western clawed frog).